A 1279-amino-acid chain; its full sequence is Cellulose synthase operon protein C (1279 aa).

An N-terminal signal peptide occupies residues 1 to 21 (MRRHTLAIAILAALASTASVA). 10 TPR repeats span residues 27–60 (QSLL…SPDQ), 62–94 (DALY…SPVP), 218–250 (ADET…HPDD), 306–339 (VDAL…PGGA), 384–417 (PGAA…HPGD), 460–493 (ALRA…DPEN), 495–527 (WTRF…QPNQ), 606–639 (PERV…NPNP), 719–752 (ALGV…NPNN), and 787–820 (PEIL…ENAM).

It functions in the pathway glycan metabolism; bacterial cellulose biosynthesis. Required for maximal bacterial cellulose synthesis. The chain is Cellulose synthase operon protein C (bscS) from Pseudomonas fluorescens (strain SBW25).